We begin with the raw amino-acid sequence, 517 residues long: C-22 sterol desaturase ERG5 (517 aa).

The helical transmembrane segment at 21-41 (LAVAKATGSPITTLFTIIFLI) threads the bilayer. Cys458 is a binding site for heme.

This sequence belongs to the cytochrome P450 family. Heme serves as cofactor.

The protein resides in the endoplasmic reticulum membrane. It carries out the reaction 5-dehydroepisterol + NADPH + O2 + H(+) = ergosta-5,7,22,24(28)-tetraen-3beta-ol + NADP(+) + 2 H2O. The protein operates within steroid metabolism; ergosterol biosynthesis; ergosterol from zymosterol: step 4/5. C-22 sterol desaturase; part of the third module of ergosterol biosynthesis pathway that includes the late steps of the pathway. ERG5 converts 5-dehydroepisterol into ergosta-5,7,22,24(28)-tetraen-3beta-ol by forming the C-22(23) double bond in the sterol side chain. The third module or late pathway involves the ergosterol synthesis itself through consecutive reactions that mainly occur in the endoplasmic reticulum (ER) membrane. Firstly, the squalene synthase ERG9 catalyzes the condensation of 2 farnesyl pyrophosphate moieties to form squalene, which is the precursor of all steroids. Squalene synthase is crucial for balancing the incorporation of farnesyl diphosphate (FPP) into sterol and nonsterol isoprene synthesis. Secondly, the squalene epoxidase ERG1 catalyzes the stereospecific oxidation of squalene to (S)-2,3-epoxysqualene, which is considered to be a rate-limiting enzyme in steroid biosynthesis. Then, the lanosterol synthase ERG7 catalyzes the cyclization of (S)-2,3 oxidosqualene to lanosterol, a reaction that forms the sterol core. In the next steps, lanosterol is transformed to zymosterol through a complex process involving various demethylation, reduction and desaturation reactions. The lanosterol 14-alpha-demethylase ERG11 (also known as CYP51) catalyzes C14-demethylation of lanosterol to produce 4,4'-dimethyl cholesta-8,14,24-triene-3-beta-ol, which is critical for ergosterol biosynthesis. The C-14 reductase ERG24 reduces the C14=C15 double bond of 4,4-dimethyl-cholesta-8,14,24-trienol to produce 4,4-dimethyl-cholesta-8,24-dienol. 4,4-dimethyl-cholesta-8,24-dienol is substrate of the C-4 demethylation complex ERG25-ERG26-ERG27 in which ERG25 catalyzes the three-step monooxygenation required for the demethylation of 4,4-dimethyl and 4alpha-methylsterols, ERG26 catalyzes the oxidative decarboxylation that results in a reduction of the 3-beta-hydroxy group at the C-3 carbon to an oxo group, and ERG27 is responsible for the reduction of the keto group on the C-3. ERG28 has a role as a scaffold to help anchor ERG25, ERG26 and ERG27 to the endoplasmic reticulum and ERG29 regulates the activity of the iron-containing C4-methylsterol oxidase ERG25. Then, the sterol 24-C-methyltransferase ERG6 catalyzes the methyl transfer from S-adenosyl-methionine to the C-24 of zymosterol to form fecosterol. The C-8 sterol isomerase ERG2 catalyzes the reaction which results in unsaturation at C-7 in the B ring of sterols and thus converts fecosterol to episterol. The sterol-C5-desaturase ERG3 then catalyzes the introduction of a C-5 double bond in the B ring to produce 5-dehydroepisterol. The C-22 sterol desaturase ERG5 further converts 5-dehydroepisterol into ergosta-5,7,22,24(28)-tetraen-3beta-ol by forming the C-22(23) double bond in the sterol side chain. Finally, ergosta-5,7,22,24(28)-tetraen-3beta-ol is substrate of the C-24(28) sterol reductase ERG4 to produce ergosterol. The chain is C-22 sterol desaturase ERG5 from Candida albicans (strain SC5314 / ATCC MYA-2876) (Yeast).